We begin with the raw amino-acid sequence, 454 residues long: Type II methyltransferase M.MvaI (454 aa).

Belongs to the N(4)/N(6)-methyltransferase family. N(4) subfamily.

It catalyses the reaction a 2'-deoxycytidine in DNA + S-adenosyl-L-methionine = an N(4)-methyl-2'-deoxycytidine in DNA + S-adenosyl-L-homocysteine + H(+). Functionally, an alpha subtype methylase, recognizes the double-stranded sequence 5'-CCWGG-3', methylatES C-2 on both strands, and protects the DNA from cleavage by the MvaI endonuclease. The chain is Type II methyltransferase M.MvaI from Kocuria varians (Micrococcus varians).